A 1382-amino-acid chain; its full sequence is Hepatocyte growth factor receptor (1382 aa).

An N-terminal signal peptide occupies residues 1–24 (MKASAVLAPGILALLFTLVQGNDG). Topologically, residues 25 to 933 (ECQEALAKSE…VIVQPDQNFT (909 aa)) are extracellular. One can recognise a Sema domain in the interval 27–516 (QEALAKSEMN…TGKKITKIPL (490 aa)). 3 N-linked (GlcNAc...) asparagine glycosylation sites follow: N45, N100, and N106. 4 cysteine pairs are disulfide-bonded: C95–C101, C98–C160, C133–C141, and C173–C176. N-linked (GlcNAc...) asparagine glycans are attached at residues N203 and N359. 2 disulfide bridges follow: C299–C364 and C386–C398. N-linked (GlcNAc...) asparagine glycosylation is found at N400 and N406. 4 disulfides stabilise this stretch: C521/C539, C527/C562, C530/C546, and C542/C552. 3 IPT/TIG domains span residues 564–656 (PAIH…FSYV), 658–740 (PVIT…FSYR), and 743–837 (PIVH…LIYV). A glycan (O-linked (Man) threonine) is linked at T583. N-linked (GlcNAc...) asparagine glycans are attached at residues N608 and N636. Residues T677 and T762 are each glycosylated (O-linked (Man) threonine). 3 N-linked (GlcNAc...) asparagine glycosylation sites follow: N786, N880, and N931. The helical transmembrane segment at 934 to 956 (GLIVGVVSISIILLLLLGLFLWM) threads the bilayer. At 957–1382 (KKRKQIKDLG…QDNVNGEVDT (426 aa)) the chain is on the cytoplasmic side. A Phosphoserine modification is found at S967. A Phosphothreonine modification is found at T978. 3 positions are modified to phosphoserine: S991, S998, and S1001. At Y1004 the chain carries Phosphotyrosine. The region spanning 1079–1346 (VHFNEVIGRG…RISAIFSTFI (268 aa)) is the Protein kinase domain. Residues 1085–1093 (IGRGHFGCV) and K1111 each bind ATP. D1205 serves as the catalytic Proton acceptor. Residues 1213 to 1382 (LDEKFTVKVA…QDNVNGEVDT (170 aa)) form an interaction with RANBP9 region. Y1231 is subject to Phosphotyrosine. Y1235 and Y1236 each carry phosphotyrosine; by autocatalysis. T1290 carries the post-translational modification Phosphothreonine. Residues 1321–1360 (WHPKAEMRPSFSELVSRISAIFSTFIGEHYVHVNATYVNV) are interaction with MUC20. Y1350 and Y1357 each carry phosphotyrosine; by autocatalysis. Y1366 carries the post-translational modification Phosphotyrosine.

The protein belongs to the protein kinase superfamily. Tyr protein kinase family. As to quaternary structure, heterodimer made of an alpha chain (50 kDa) and a beta chain (145 kDa) which are disulfide linked. Binds PLXNB1. Interacts when phosphorylated with downstream effectors including STAT3, PIK3R1, SRC, PCLG1, GRB2 and GAB1. Interacts with SPSB1, SPSB2 and SPSB4. Interacts with INPP5D/SHIP1. When phosphorylated at Tyr-1357, interacts with INPPL1/SHIP2. Interacts with RANBP9 and RANBP10, as well as SPSB1, SPSB2, SPSB3 and SPSB4. SPSB1 binding occurs in the presence and in the absence of HGF, however HGF treatment has a positive effect on this interaction. Interacts with MUC20; prevents interaction with GRB2 and suppresses hepatocyte growth factor-induced cell proliferation. Interacts with GRB10. Interacts with PTPN1 and PTPN2. Interacts with HSP90AA1 and HSP90AB1; the interaction suppresses MET kinase activity. Interacts with tensin TNS3. Interacts (when phosphorylated) with tensin TNS4 (via SH2 domain); the interaction increases MET protein stability by inhibiting MET endocytosis and subsequent lysosomal degradation. Post-translationally, autophosphorylated in response to ligand binding on Tyr-1235 and Tyr-1236 in the kinase domain leading to further phosphorylation of Tyr-1350 and Tyr-1357 in the C-terminal multifunctional docking site. Dephosphorylated by PTPRJ at Tyr-1350 and Tyr-1366. Dephosphorylated by PTPN1 and PTPN2. In terms of processing, ubiquitinated. Ubiquitination by CBL regulates the receptor stability and activity through proteasomal degradation. O-mannosylation of IPT/TIG domains by TMEM260 is required for protein maturation. O-mannosylated residues are composed of single mannose glycans that are not elongated or modified.

It is found in the membrane. It carries out the reaction L-tyrosyl-[protein] + ATP = O-phospho-L-tyrosyl-[protein] + ADP + H(+). In its inactive state, the C-terminal tail interacts with the catalytic domain and inhibits the kinase activity. Upon ligand binding, the C-terminal tail is displaced and becomes phosphorylated, thus increasing the kinase activity. Functionally, receptor tyrosine kinase that transduces signals from the extracellular matrix into the cytoplasm by binding to hepatocyte growth factor/HGF ligand. Regulates many physiological processes including proliferation, scattering, morphogenesis and survival. Ligand binding at the cell surface induces autophosphorylation of MET on its intracellular domain that provides docking sites for downstream signaling molecules. Following activation by ligand, interacts with the PI3-kinase subunit PIK3R1, PLCG1, SRC, GRB2, STAT3 or the adapter GAB1. Recruitment of these downstream effectors by MET leads to the activation of several signaling cascades including the RAS-ERK, PI3 kinase-AKT, or PLCgamma-PKC. The RAS-ERK activation is associated with the morphogenetic effects while PI3K/AKT coordinates prosurvival effects. During embryonic development, MET signaling plays a role in gastrulation, development and migration of muscles and neuronal precursors, angiogenesis and kidney formation. In adults, participates in wound healing as well as organ regeneration and tissue remodeling. Also promotes differentiation and proliferation of hematopoietic cells. This is Hepatocyte growth factor receptor (MET) from Eulemur macaco macaco (Black lemur).